The sequence spans 247 residues: Uridylate kinase (247 aa).

18–21 (KLSG) lines the ATP pocket. Glycine 60 is a binding site for UMP. ATP is bound by residues glycine 61 and arginine 65. UMP is bound by residues aspartate 80 and 141–148 (TGNPFFTT). 3 residues coordinate ATP: threonine 168, tyrosine 174, and aspartate 177.

The protein belongs to the UMP kinase family. Homohexamer.

It localises to the cytoplasm. It carries out the reaction UMP + ATP = UDP + ADP. The protein operates within pyrimidine metabolism; CTP biosynthesis via de novo pathway; UDP from UMP (UMPK route): step 1/1. With respect to regulation, inhibited by UTP. In terms of biological role, catalyzes the reversible phosphorylation of UMP to UDP. In Pseudomonas savastanoi pv. phaseolicola (strain 1448A / Race 6) (Pseudomonas syringae pv. phaseolicola (strain 1448A / Race 6)), this protein is Uridylate kinase.